We begin with the raw amino-acid sequence, 528 residues long: DnaJ homolog 1, mitochondrial (528 aa).

The N-terminal 66 residues, 1–66 (MFSKYLQSRV…REFSRCAALK (66 aa)), are a transit peptide targeting the mitochondrion. A J domain is found at 86–150 (DPYKTLGVSK…KKKKAFDTYG (65 aa)). The segment at 227–308 (GAKKDLSYSV…CMGSGTVRER (82 aa)) adopts a CR-type zinc-finger fold. CXXCXGXG motif repeat units lie at residues 240–247 (CSSCHGSG), 257–264 (CFACKGTG), 280–287 (CDSCGGTG), and 296–303 (CRSCMGSG). A disordered region spans residues 455–528 (NDSTARRTQS…QNPKKDESSS (74 aa)). Residues 462-488 (TQSSPSGTNSSTSTSSTSSKHSTGIST) show a composition bias toward low complexity. Positions 513 to 528 (LHPDEDQNPKKDESSS) are enriched in basic and acidic residues.

The protein localises to the mitochondrion. The chain is DnaJ homolog 1, mitochondrial (mdj1) from Schizosaccharomyces pombe (strain 972 / ATCC 24843) (Fission yeast).